The following is a 273-amino-acid chain: MLTYPNIDPVALSLGPLKVHWYGLMYLLAFLCAWGLASYRAKQRDSWTSEMVSDLVFYGALGVVLGGRVGYVLFYEFDKFLANPIWLFQVWTGGMSFHGGFIGVMLAMILWCRKYQKTWFETLDFIAPCVPTGLMFGRIGNFIGAELYGREVQDPNYPFGMIFPTDPFHLVRHPSQIYQAICEGLLLFILLWWFSSKPRPRMAVSALFLMGYGVARFVVEFFREPDADQGFILFGWMTKGQILTVPMLLIGLWMIWYAYQRKVYDWGPLKTHK.

Transmembrane regions (helical) follow at residues 19 to 39, 55 to 75, 90 to 110, 125 to 145, 174 to 194, 202 to 222, and 230 to 250; these read VHWY…LASY, LVFY…VLFY, VWTG…AMIL, FIAP…FIGA, PSQI…LWWF, MAVS…VEFF, and GFIL…MLLI. Arg138 contributes to the a 1,2-diacyl-sn-glycero-3-phospho-(1'-sn-glycerol) binding site.

The protein belongs to the Lgt family.

It localises to the cell inner membrane. It catalyses the reaction L-cysteinyl-[prolipoprotein] + a 1,2-diacyl-sn-glycero-3-phospho-(1'-sn-glycerol) = an S-1,2-diacyl-sn-glyceryl-L-cysteinyl-[prolipoprotein] + sn-glycerol 1-phosphate + H(+). It participates in protein modification; lipoprotein biosynthesis (diacylglyceryl transfer). In terms of biological role, catalyzes the transfer of the diacylglyceryl group from phosphatidylglycerol to the sulfhydryl group of the N-terminal cysteine of a prolipoprotein, the first step in the formation of mature lipoproteins. The protein is Phosphatidylglycerol--prolipoprotein diacylglyceryl transferase of Acinetobacter baylyi (strain ATCC 33305 / BD413 / ADP1).